The following is a 244-amino-acid chain: tRNA (guanine-N(1)-)-methyltransferase (244 aa).

Residues Gly-120 and Ile-140–Leu-145 contribute to the S-adenosyl-L-methionine site.

Belongs to the RNA methyltransferase TrmD family. As to quaternary structure, homodimer.

The protein localises to the cytoplasm. It catalyses the reaction guanosine(37) in tRNA + S-adenosyl-L-methionine = N(1)-methylguanosine(37) in tRNA + S-adenosyl-L-homocysteine + H(+). Specifically methylates guanosine-37 in various tRNAs. The protein is tRNA (guanine-N(1)-)-methyltransferase of Brucella canis (strain ATCC 23365 / NCTC 10854 / RM-666).